Reading from the N-terminus, the 77-residue chain is ATP synthase subunit c (77 aa).

2 helical membrane-spanning segments follow: residues 10–30 (IAVA…FGNM) and 57–77 (GLID…LFVL).

This sequence belongs to the ATPase C chain family. In terms of assembly, F-type ATPases have 2 components, F(1) - the catalytic core - and F(0) - the membrane proton channel. F(1) has five subunits: alpha(3), beta(3), gamma(1), delta(1), epsilon(1). F(0) has three main subunits: a(1), b(2) and c(10-14). The alpha and beta chains form an alternating ring which encloses part of the gamma chain. F(1) is attached to F(0) by a central stalk formed by the gamma and epsilon chains, while a peripheral stalk is formed by the delta and b chains.

It localises to the cell inner membrane. Its function is as follows. F(1)F(0) ATP synthase produces ATP from ADP in the presence of a proton or sodium gradient. F-type ATPases consist of two structural domains, F(1) containing the extramembraneous catalytic core and F(0) containing the membrane proton channel, linked together by a central stalk and a peripheral stalk. During catalysis, ATP synthesis in the catalytic domain of F(1) is coupled via a rotary mechanism of the central stalk subunits to proton translocation. Functionally, key component of the F(0) channel; it plays a direct role in translocation across the membrane. A homomeric c-ring of between 10-14 subunits forms the central stalk rotor element with the F(1) delta and epsilon subunits. This is ATP synthase subunit c from Pseudoalteromonas translucida (strain TAC 125).